A 416-amino-acid polypeptide reads, in one-letter code: MKILLIGSGGREHAMAWKMAQNKSVERIYCAPGNGGTAKENKCENVNLEKTEELIEFASKNNIDLTVVGPEAPLVDGIVNEFKEKGLKIFGPGKVGAQLEGSKSFSKDFMKKYNVKTAEYAVFENSEESLEYLKKCTYPIVIKADGLAAGKGVVICEDYKLAEETIKAFMVKDVFKGSGKKVVIEEYLEGVEASILSITDGKAIIPFVSSKDHKQIFDGNKGPNTGGMGAISPNPYCTEEVLKSFEEEILKPTLIGIQEERMDFTGIIFFGLMITKKGVYLLEYNVRLGDPETQVVLYLMKSDFVDLINAAMDKKLSDFDIEWYDGNACCVVAASKGYPKNYSTGYEISGIDDAGDKVFCAGVKLENGVYKTSGGRVLCASARGITLDEAIKKAYTDIERIKFDGIYYRKDIGKSK.

One can recognise an ATP-grasp domain in the interval 107–313; it reads KDFMKKYNVK…FVDLINAAMD (207 aa). Residue 133 to 194 participates in ATP binding; it reads LKKCTYPIVI…EEYLEGVEAS (62 aa). Residues Glu-283 and Asn-285 each contribute to the Mg(2+) site.

It belongs to the GARS family. Requires Mg(2+) as cofactor. The cofactor is Mn(2+).

It carries out the reaction 5-phospho-beta-D-ribosylamine + glycine + ATP = N(1)-(5-phospho-beta-D-ribosyl)glycinamide + ADP + phosphate + H(+). It participates in purine metabolism; IMP biosynthesis via de novo pathway; N(1)-(5-phospho-D-ribosyl)glycinamide from 5-phospho-alpha-D-ribose 1-diphosphate: step 2/2. The sequence is that of Phosphoribosylamine--glycine ligase from Clostridium acetobutylicum (strain ATCC 824 / DSM 792 / JCM 1419 / IAM 19013 / LMG 5710 / NBRC 13948 / NRRL B-527 / VKM B-1787 / 2291 / W).